We begin with the raw amino-acid sequence, 201 residues long: Adenylyl-sulfate kinase (201 aa).

ATP is bound at residue 35–42 (GLSGSGKS). S109 (phosphoserine intermediate) is an active-site residue.

The protein belongs to the APS kinase family.

It carries out the reaction adenosine 5'-phosphosulfate + ATP = 3'-phosphoadenylyl sulfate + ADP + H(+). It participates in sulfur metabolism; hydrogen sulfide biosynthesis; sulfite from sulfate: step 2/3. In terms of biological role, catalyzes the synthesis of activated sulfate. In Citrobacter koseri (strain ATCC BAA-895 / CDC 4225-83 / SGSC4696), this protein is Adenylyl-sulfate kinase.